Consider the following 177-residue polypeptide: Large ribosomal subunit protein uL6 (177 aa).

The protein belongs to the universal ribosomal protein uL6 family. In terms of assembly, part of the 50S ribosomal subunit.

Its function is as follows. This protein binds to the 23S rRNA, and is important in its secondary structure. It is located near the subunit interface in the base of the L7/L12 stalk, and near the tRNA binding site of the peptidyltransferase center. The sequence is that of Large ribosomal subunit protein uL6 from Paracidovorax citrulli (strain AAC00-1) (Acidovorax citrulli).